The chain runs to 123 residues: Small ribosomal subunit protein uS13 (123 aa).

The segment at 97 to 123 (PVRGQRTHTNAKTRKGRSKLPVAAKKK) is disordered.

The protein belongs to the universal ribosomal protein uS13 family. Part of the 30S ribosomal subunit. Forms a loose heterodimer with protein S19. Forms two bridges to the 50S subunit in the 70S ribosome.

Functionally, located at the top of the head of the 30S subunit, it contacts several helices of the 16S rRNA. In the 70S ribosome it contacts the 23S rRNA (bridge B1a) and protein L5 of the 50S subunit (bridge B1b), connecting the 2 subunits; these bridges are implicated in subunit movement. Contacts the tRNAs in the A and P-sites. The polypeptide is Small ribosomal subunit protein uS13 (Ehrlichia chaffeensis (strain ATCC CRL-10679 / Arkansas)).